Consider the following 431-residue polypeptide: Gamma-glutamyl phosphate reductase (431 aa).

It belongs to the gamma-glutamyl phosphate reductase family.

Its subcellular location is the cytoplasm. It carries out the reaction L-glutamate 5-semialdehyde + phosphate + NADP(+) = L-glutamyl 5-phosphate + NADPH + H(+). It functions in the pathway amino-acid biosynthesis; L-proline biosynthesis; L-glutamate 5-semialdehyde from L-glutamate: step 2/2. In terms of biological role, catalyzes the NADPH-dependent reduction of L-glutamate 5-phosphate into L-glutamate 5-semialdehyde and phosphate. The product spontaneously undergoes cyclization to form 1-pyrroline-5-carboxylate. This is Gamma-glutamyl phosphate reductase from Trichodesmium erythraeum (strain IMS101).